A 342-amino-acid polypeptide reads, in one-letter code: Tetraacyldisaccharide 4'-kinase (342 aa).

68 to 75 (TVGGTGKT) is an ATP binding site.

The protein belongs to the LpxK family.

The catalysed reaction is a lipid A disaccharide + ATP = a lipid IVA + ADP + H(+). The protein operates within glycolipid biosynthesis; lipid IV(A) biosynthesis; lipid IV(A) from (3R)-3-hydroxytetradecanoyl-[acyl-carrier-protein] and UDP-N-acetyl-alpha-D-glucosamine: step 6/6. In terms of biological role, transfers the gamma-phosphate of ATP to the 4'-position of a tetraacyldisaccharide 1-phosphate intermediate (termed DS-1-P) to form tetraacyldisaccharide 1,4'-bis-phosphate (lipid IVA). This Burkholderia vietnamiensis (strain G4 / LMG 22486) (Burkholderia cepacia (strain R1808)) protein is Tetraacyldisaccharide 4'-kinase.